A 163-amino-acid polypeptide reads, in one-letter code: uncharacterized protein (163 aa).

The tract at residues 144 to 163 (WSHSQSQLGTPGRGKGALGF) is disordered. The segment covering 154 to 163 (PGRGKGALGF) has biased composition (gly residues).

This is an uncharacterized protein from Homo sapiens (Human).